The primary structure comprises 464 residues: Serine--tRNA synthetase-like protein Slimp (464 aa).

The protein belongs to the class-II aminoacyl-tRNA synthetase family. Type-1 seryl-tRNA synthetase subfamily.

The protein localises to the mitochondrion. Functionally, essential protein which may play a role in mitochondrial morphogenesis and function. Has transfer RNA (tRNA)-binding activity and can bind tRNA(Ser) but does not have serine--tRNA ligase activity and does not bind ATP. The protein is Serine--tRNA synthetase-like protein Slimp of Drosophila melanogaster (Fruit fly).